The chain runs to 510 residues: tRNA-2-methylthio-N(6)-dimethylallyladenosine synthase (510 aa).

Positions 19-144 (RTYQVRTFGC…LPVLLERARH (126 aa)) constitute an MTTase N-terminal domain. Residues cysteine 28, cysteine 73, cysteine 107, cysteine 181, cysteine 185, and cysteine 188 each coordinate [4Fe-4S] cluster. Residues 167–397 (RESPYAAWVS…TALQDRITYE (231 aa)) enclose the Radical SAM core domain. Positions 400 to 470 (QAQTGRTLEV…PHYLEADDVS (71 aa)) constitute a TRAM domain. Residues 482–492 (AWEARQARPEP) are compositionally biased toward basic and acidic residues. Residues 482–510 (AWEARQARPEPESTGPRPVGLGLPTLRRA) are disordered.

This sequence belongs to the methylthiotransferase family. MiaB subfamily. Monomer. [4Fe-4S] cluster serves as cofactor.

Its subcellular location is the cytoplasm. The enzyme catalyses N(6)-dimethylallyladenosine(37) in tRNA + (sulfur carrier)-SH + AH2 + 2 S-adenosyl-L-methionine = 2-methylsulfanyl-N(6)-dimethylallyladenosine(37) in tRNA + (sulfur carrier)-H + 5'-deoxyadenosine + L-methionine + A + S-adenosyl-L-homocysteine + 2 H(+). In terms of biological role, catalyzes the methylthiolation of N6-(dimethylallyl)adenosine (i(6)A), leading to the formation of 2-methylthio-N6-(dimethylallyl)adenosine (ms(2)i(6)A) at position 37 in tRNAs that read codons beginning with uridine. In Kineococcus radiotolerans (strain ATCC BAA-149 / DSM 14245 / SRS30216), this protein is tRNA-2-methylthio-N(6)-dimethylallyladenosine synthase.